The chain runs to 378 residues: ETVTGVINGKVKGGFTVELNGIRAFLPGSLVDVRPVRDTTHLEGKELEFKVIKLDQKRNNVVVSRRAVIESESSAERDQLLENLQEGMEVKGIVKNLTDYGAFVDLGGVDGLLHITDMAWKRVKHPSEIVNVGDEITVKVLKFDRERTRVSLGLKQLGEDPWVAIAKRYPEGTKLTGRVTNLTDYGCFVEIEEGVEGLVHVSEMDWTNKNIHPSKVVNVGDVVEVMVLDIDEERRRISLGLKQCKSNPWQQFAETHNKGDRVEGKIKSITDFGIFIGLEGGIDGLVHLSDISWNVAGEEAVREYKKGDEIAAVVLQVDAERERISLGVKQLAEDPFNNYLAATKKGAIVTGKVTAVDAKGATVELTLGVEGYLRASEA.

S1 motif domains follow at residues 1–66 (ETVT…VSRR), 87–155 (GMEV…LGLK), 172–242 (GTKL…LGLK), 259–329 (GDRV…LGVK), and 346–378 (GAIV…ASEA).

The protein belongs to the bacterial ribosomal protein bS1 family.

Functionally, binds mRNA; thus facilitating recognition of the initiation point. It is needed to translate mRNA with a short Shine-Dalgarno (SD) purine-rich sequence. This is Small ribosomal subunit protein bS1 (rpsA) from Providencia sp.